The chain runs to 301 residues: Nucleosome assembly protein 1;3 (301 aa).

The stretch at 15–69 (VETLKNKLQALAEQHVDVLESLAPVVRKRVDVLIEIQSQHDELEAKFLEEKSALE) forms a coiled coil. Positions 36–51 (LAPVVRKRVDVLIEIQ) match the Nuclear export signal motif. A disordered region spans residues 279 to 301 (EDYGASWVDDEEDDDDEYSDEEA). Ser-297 carries the post-translational modification Phosphoserine; by CK2.

Belongs to the nucleosome assembly protein (NAP) family.

It localises to the nucleus. The protein localises to the cytoplasm. Its function is as follows. May modulate chromatin structure by regulation of nucleosome assembly/disassembly. This is Nucleosome assembly protein 1;3 (NAP1;3) from Oryza sativa subsp. indica (Rice).